We begin with the raw amino-acid sequence, 89 residues long: Small ribosomal subunit protein uS15 (89 aa).

This sequence belongs to the universal ribosomal protein uS15 family. As to quaternary structure, part of the 30S ribosomal subunit. Forms a bridge to the 50S subunit in the 70S ribosome, contacting the 23S rRNA.

In terms of biological role, one of the primary rRNA binding proteins, it binds directly to 16S rRNA where it helps nucleate assembly of the platform of the 30S subunit by binding and bridging several RNA helices of the 16S rRNA. Its function is as follows. Forms an intersubunit bridge (bridge B4) with the 23S rRNA of the 50S subunit in the ribosome. The sequence is that of Small ribosomal subunit protein uS15 from Mycobacterium sp. (strain JLS).